The chain runs to 128 residues: Large ribosomal subunit protein bL19 (128 aa).

This sequence belongs to the bacterial ribosomal protein bL19 family.

Its function is as follows. This protein is located at the 30S-50S ribosomal subunit interface and may play a role in the structure and function of the aminoacyl-tRNA binding site. The chain is Large ribosomal subunit protein bL19 from Caldicellulosiruptor bescii (strain ATCC BAA-1888 / DSM 6725 / KCTC 15123 / Z-1320) (Anaerocellum thermophilum).